The chain runs to 826 residues: Leucine--tRNA ligase (826 aa).

The 'HIGH' region motif lies at 42 to 52; the sequence is PYPSGNLHMGH. Positions 581–585 match the 'KMSKS' region motif; it reads KMSKS. K584 lines the ATP pocket.

This sequence belongs to the class-I aminoacyl-tRNA synthetase family.

The protein resides in the cytoplasm. It carries out the reaction tRNA(Leu) + L-leucine + ATP = L-leucyl-tRNA(Leu) + AMP + diphosphate. In Desulforudis audaxviator (strain MP104C), this protein is Leucine--tRNA ligase.